We begin with the raw amino-acid sequence, 1097 residues long: DNA-directed RNA polymerase subunit beta (1097 aa).

Residues 1073–1097 (DVNPRRSTPSRPTYESLGVADYDED) are disordered.

It belongs to the RNA polymerase beta chain family. In cyanobacteria the RNAP catalytic core is composed of 2 alpha, 1 beta, 1 beta', 1 gamma and 1 omega subunit. When a sigma factor is associated with the core the holoenzyme is formed, which can initiate transcription.

It catalyses the reaction RNA(n) + a ribonucleoside 5'-triphosphate = RNA(n+1) + diphosphate. Its function is as follows. DNA-dependent RNA polymerase catalyzes the transcription of DNA into RNA using the four ribonucleoside triphosphates as substrates. The sequence is that of DNA-directed RNA polymerase subunit beta from Synechococcus sp. (strain CC9311).